The primary structure comprises 167 residues: UPF0114 protein in repA1-repA2 intergenic region (167 aa).

The next 3 helical transmembrane spans lie at 15 to 35 (LMFP…LKFF), 53 to 73 (LVLA…LVMV), and 136 to 156 (IMLC…MAYI).

Belongs to the UPF0114 family.

The protein resides in the cell membrane. In Buchnera aphidicola subsp. Schizaphis graminum (strain Sg), this protein is UPF0114 protein in repA1-repA2 intergenic region.